Reading from the N-terminus, the 37-residue chain is Kunitz-type proteinase inhibitor AEPI-IV (37 aa).

The BPTI/Kunitz inhibitor domain maps to 6-37 (CQLPAVVGRCRGRFPRYYYNTEAGKCQRFIYG).

The protein belongs to the venom Kunitz-type family. Sea anemone type 2 potassium channel toxin subfamily.

The protein resides in the secreted. It is found in the nematocyst. Dual-function toxin that inhibits both the serine protease trypsin and voltage-gated potassium channels (Kv). The protein is Kunitz-type proteinase inhibitor AEPI-IV of Actinia equina (Beadlet anemone).